We begin with the raw amino-acid sequence, 194 residues long: Glycerol-3-phosphate acyltransferase (194 aa).

Helical transmembrane passes span 7 to 27 (LLMA…YWVC), 59 to 79 (LTLF…AMLG), 86 to 106 (GVTA…HFKG), 116 to 136 (AGLA…AAVV), and 157 to 177 (AWRL…FILI).

It belongs to the PlsY family. In terms of assembly, probably interacts with PlsX.

The protein resides in the cell inner membrane. It catalyses the reaction an acyl phosphate + sn-glycerol 3-phosphate = a 1-acyl-sn-glycero-3-phosphate + phosphate. Its pathway is lipid metabolism; phospholipid metabolism. Its function is as follows. Catalyzes the transfer of an acyl group from acyl-phosphate (acyl-PO(4)) to glycerol-3-phosphate (G3P) to form lysophosphatidic acid (LPA). This enzyme utilizes acyl-phosphate as fatty acyl donor, but not acyl-CoA or acyl-ACP. The polypeptide is Glycerol-3-phosphate acyltransferase (Hahella chejuensis (strain KCTC 2396)).